Here is a 224-residue protein sequence, read N- to C-terminus: Zinc finger protein 22 (224 aa).

The segment at 1–34 (MRLAKPKAGISRSSSQGKAYENKRKTGRQRQKWG) is disordered. An N6-acetyllysine mark is found at lysine 18 and lysine 23. Serine 49 bears the Phosphoserine mark. C2H2-type zinc fingers lie at residues 55 to 77 (YKCTECEKSFSQSSTLFQHQKIH), 83 to 105 (HKCADCGKSFFQSSNLIQHRRIH), 111 to 133 (YKCDECGESFKQSSNLIQHQRIH), 139 to 161 (YQCDECGRCFSQSSHLIQHQRTH), and 167 to 189 (YQCSECGKCFSQSSHLRQHMKVH).

Belongs to the krueppel C2H2-type zinc-finger protein family. As to expression, in the embryo, expressed in developing craniofacial structures including dental epithelium of maxillary molar tooth organs, tongue epithelium and muscle, and craniofacial bone osteoblasts. In the adult, expressed in mesoderm-derived tissues such as skeletal muscle, heart, kidney and liver. Intermediate expression in spleen, thymus and brain. Low levels in endoderm-derived tissues such as intestine and colon.

It is found in the nucleus. Functionally, binds DNA through the consensus sequence 5'-CAATG-3'. May be involved in transcriptional regulation and may play a role in tooth formation. The protein is Zinc finger protein 22 (ZNF22) of Homo sapiens (Human).